The sequence spans 126 residues: Large ribosomal subunit protein bL20 (126 aa).

This sequence belongs to the bacterial ribosomal protein bL20 family.

Binds directly to 23S ribosomal RNA and is necessary for the in vitro assembly process of the 50S ribosomal subunit. It is not involved in the protein synthesizing functions of that subunit. This Frankia casuarinae (strain DSM 45818 / CECT 9043 / HFP020203 / CcI3) protein is Large ribosomal subunit protein bL20.